The sequence spans 817 residues: Trehalose-phosphatase (817 aa).

Residues 1–547 (MSVYGKIPST…LAATKTDQRI (547 aa)) are glycosyltransferase.

This sequence in the N-terminal section; belongs to the glycosyltransferase 20 family. The protein in the C-terminal section; belongs to the trehalose phosphatase family. As to quaternary structure, component of the trehalose synthase complex that contains at least tps1, ntp1, and tpp1. Interacts with tps1. Interacts with ntp1. Requires Mg(2+) as cofactor.

The catalysed reaction is alpha,alpha-trehalose 6-phosphate + H2O = alpha,alpha-trehalose + phosphate. The protein operates within carbohydrate biosynthesis. Phosphatase catalytic subunit of the trehalose synthase complex that catalyzes the production of trehalose from glucose-6-phosphate and UDP-alpha-D-glucose in a two step process. The disaccharide trehalose serves as a storage carbohydrate that is mobilized during nutrient stress and spore germination. Together with ntp1, regulates the level of trehalose as a protectant for cell integrity during thermal, osmotic, and oxidative stress. This chain is Trehalose-phosphatase, found in Schizosaccharomyces pombe (strain 972 / ATCC 24843) (Fission yeast).